The chain runs to 336 residues: Holliday junction branch migration complex subunit RuvB (336 aa).

The segment at 4 to 184 is large ATPase domain (RuvB-L); the sequence is ADRLIQPQVI…FGIPLRLEFY (181 aa). ATP contacts are provided by residues Arg-24, Gly-65, Lys-68, Thr-69, Thr-70, 131 to 133, Arg-174, Tyr-184, and Arg-221; that span reads EDY. Residue Thr-69 coordinates Mg(2+). The tract at residues 185–255 is small ATPAse domain (RuvB-S); that stretch reads NIKDLSTIVI…VAELALDMLD (71 aa). Residues 258–336 form a head domain (RuvB-H) region; the sequence is AEGFDYMDRK…HFNLIQPEAK (79 aa). 3 residues coordinate DNA: Arg-294, Arg-313, and Arg-318.

This sequence belongs to the RuvB family. Homohexamer. Forms an RuvA(8)-RuvB(12)-Holliday junction (HJ) complex. HJ DNA is sandwiched between 2 RuvA tetramers; dsDNA enters through RuvA and exits via RuvB. An RuvB hexamer assembles on each DNA strand where it exits the tetramer. Each RuvB hexamer is contacted by two RuvA subunits (via domain III) on 2 adjacent RuvB subunits; this complex drives branch migration. In the full resolvosome a probable DNA-RuvA(4)-RuvB(12)-RuvC(2) complex forms which resolves the HJ.

It is found in the cytoplasm. The catalysed reaction is ATP + H2O = ADP + phosphate + H(+). Functionally, the RuvA-RuvB-RuvC complex processes Holliday junction (HJ) DNA during genetic recombination and DNA repair, while the RuvA-RuvB complex plays an important role in the rescue of blocked DNA replication forks via replication fork reversal (RFR). RuvA specifically binds to HJ cruciform DNA, conferring on it an open structure. The RuvB hexamer acts as an ATP-dependent pump, pulling dsDNA into and through the RuvAB complex. RuvB forms 2 homohexamers on either side of HJ DNA bound by 1 or 2 RuvA tetramers; 4 subunits per hexamer contact DNA at a time. Coordinated motions by a converter formed by DNA-disengaged RuvB subunits stimulates ATP hydrolysis and nucleotide exchange. Immobilization of the converter enables RuvB to convert the ATP-contained energy into a lever motion, pulling 2 nucleotides of DNA out of the RuvA tetramer per ATP hydrolyzed, thus driving DNA branch migration. The RuvB motors rotate together with the DNA substrate, which together with the progressing nucleotide cycle form the mechanistic basis for DNA recombination by continuous HJ branch migration. Branch migration allows RuvC to scan DNA until it finds its consensus sequence, where it cleaves and resolves cruciform DNA. The sequence is that of Holliday junction branch migration complex subunit RuvB from Shewanella piezotolerans (strain WP3 / JCM 13877).